A 277-amino-acid polypeptide reads, in one-letter code: Shikimate dehydrogenase (NADP(+)) (277 aa).

Shikimate is bound by residues 19 to 21 (SKS) and Thr66. The active-site Proton acceptor is Lys70. Asp82 is a binding site for NADP(+). Asn91 and Asp107 together coordinate shikimate. Residues 133–137 (GAGGA), 157–162 (NRTRAR), and Leu222 contribute to the NADP(+) site. Tyr224 serves as a coordination point for shikimate. Residue Gly245 coordinates NADP(+).

It belongs to the shikimate dehydrogenase family. Homodimer.

The catalysed reaction is shikimate + NADP(+) = 3-dehydroshikimate + NADPH + H(+). It participates in metabolic intermediate biosynthesis; chorismate biosynthesis; chorismate from D-erythrose 4-phosphate and phosphoenolpyruvate: step 4/7. In terms of biological role, involved in the biosynthesis of the chorismate, which leads to the biosynthesis of aromatic amino acids. Catalyzes the reversible NADPH linked reduction of 3-dehydroshikimate (DHSA) to yield shikimate (SA). The polypeptide is Shikimate dehydrogenase (NADP(+)) (Roseobacter denitrificans (strain ATCC 33942 / OCh 114) (Erythrobacter sp. (strain OCh 114))).